Consider the following 635-residue polypeptide: Extracellular metalloproteinase 9 (635 aa).

The first 19 residues, 1–19, serve as a signal peptide directing secretion; that stretch reads MHGLLLAAGLLTLPLRALA. The propeptide occupies 20 to 246; it reads HPGHQSTSIL…IHGVTDYVAD (227 aa). N-linked (GlcNAc...) asparagine glycosylation is present at asparagine 274. The tract at residues 279-307 is disordered; that stretch reads TWHSDGNTRYPTTRGNNGIAQDNPSGGTG. Asparagine 413 is a glycosylation site (N-linked (GlcNAc...) asparagine). Histidine 430 lines the Zn(2+) pocket. Glutamate 431 is a catalytic residue. Histidine 434 is a Zn(2+) binding site. Residue asparagine 475 is glycosylated (N-linked (GlcNAc...) asparagine).

This sequence belongs to the peptidase M36 family. Requires Zn(2+) as cofactor.

The protein localises to the secreted. Functionally, secreted metalloproteinase that allows assimilation of proteinaceous substrates. The protein is Extracellular metalloproteinase 9 (MEP9) of Uncinocarpus reesii (strain UAMH 1704).